We begin with the raw amino-acid sequence, 386 residues long: MLKPVRIALDAMGGDVGPQAIIPGAARALQRLGDVRFRFYGDRAQVEPLLRQHPALADVSSVHHTDVTVRMDDKPSQALRAGRRVSSMWQAIEAVKTGEADVVLSAGNTGALMAMAKVCLRMLPGIDRPAIAGIWPTLRGRSIVLDIGATIGADAPHLVDLAIMGAAMARIVLKVERPRIGLLNVGVEEIKGLEEVKTASRLLRQLTLPSLVYHGFVEGDDIGRGTVDVVVTEGFTGNIALKTAEGTAKQIAQYIREEMGRSFWSKIGYLLARRAFDALKQKLDPRQINGGVFLGLDGIVIKSHGGSDTIGTANAIEISYAMARYEILSKIRESLDLTREARAALLVEGTGSLERMAAPHRARQDELGENKVVGADQSMTAKATGT.

The segment at 359 to 386 is disordered; it reads PHRARQDELGENKVVGADQSMTAKATGT. Positions 377-386 are enriched in polar residues; sequence QSMTAKATGT.

The protein belongs to the PlsX family. In terms of assembly, homodimer. Probably interacts with PlsY.

The protein localises to the cytoplasm. It carries out the reaction a fatty acyl-[ACP] + phosphate = an acyl phosphate + holo-[ACP]. It participates in lipid metabolism; phospholipid metabolism. Catalyzes the reversible formation of acyl-phosphate (acyl-PO(4)) from acyl-[acyl-carrier-protein] (acyl-ACP). This enzyme utilizes acyl-ACP as fatty acyl donor, but not acyl-CoA. The protein is Phosphate acyltransferase of Beijerinckia indica subsp. indica (strain ATCC 9039 / DSM 1715 / NCIMB 8712).